A 175-amino-acid chain; its full sequence is MTMCSGARLALLVYGIIMHNSVSCSPAAGLSFPGIRPEEEAYDQDGNPLQDFYDWDPPGAGSPASALRDAYALYYPADRRDVAHEILNEAYRKVLDQLSARKYLQSMVARGMGENLAAAAVDDRAPLTKRHSDGIFTDSYSRYRKQMAVKKYLAAVLGKRYKQRVKNKGRRIAYL.

Positions 1-24 (MTMCSGARLALLVYGIIMHNSVSC) are cleaved as a signal peptide. Positions 25–78 (SPAAGLSFPGIRPEEEAYDQDGNPLQDFYDWDPPGAGSPASALRDAYALYYPAD) are excised as a propeptide. Residues 149–157 (VKKYLAAVL) are important for receptor binding. A Leucine amide modification is found at leucine 157. Lysine amide is present on lysine 168. A propeptide spanning residues 172-175 (IAYL) is cleaved from the precursor.

The protein belongs to the glucagon family.

Its subcellular location is the secreted. Its function is as follows. PACAP is a neuropeptide involved in diverse array of physiological processes through activating the PACAP subfamily of class B1 G protein-coupled receptors: VIP receptor 1 (VIPR1), VIP receptor 2 (VIPR2), and PACAP type I receptor (ADCYAP1R1). Exerts neuroprotective and general cytoprotective effects due to anti-apoptotic, anti-inflammatory, and antioxidant actions. Promotes neuron projection development through the RAPGEF2/Rap1/B-Raf/ERK pathway. In chromaffin cells, induces long-lasting increase of intracellular calcium concentrations and neuroendocrine secretion. Involved in the control of glucose homeostasis, induces insulin secretion by pancreatic beta cells. PACAP exists in two bioactive forms from proteolysis of the same precursor protein, PACAP27 and PACAP38, which differ by eleven amino acid residues in the C-terminus. In Rattus norvegicus (Rat), this protein is Pituitary adenylate cyclase-activating polypeptide (Adcyap1).